Here is a 212-residue protein sequence, read N- to C-terminus: Probable octanoyltransferase (212 aa).

One can recognise a BPL/LPL catalytic domain in the interval 28-199; it reads GVSEEMILVT…NLETLLQRQE (172 aa). Residues 66 to 73, 130 to 132, and 143 to 145 contribute to the substrate site; these read RGGDATYH, SVG, and GVA. Cysteine 161 serves as the catalytic Acyl-thioester intermediate.

This sequence belongs to the LipB family.

The protein resides in the cytoplasm. It catalyses the reaction octanoyl-[ACP] + L-lysyl-[protein] = N(6)-octanoyl-L-lysyl-[protein] + holo-[ACP] + H(+). It participates in protein modification; protein lipoylation via endogenous pathway; protein N(6)-(lipoyl)lysine from octanoyl-[acyl-carrier-protein]: step 1/2. Its function is as follows. Catalyzes the transfer of endogenously produced octanoic acid from octanoyl-acyl-carrier-protein onto the lipoyl domains of lipoate-dependent enzymes. Lipoyl-ACP can also act as a substrate although octanoyl-ACP is likely to be the physiological substrate. The protein is Probable octanoyltransferase of Pyrobaculum arsenaticum (strain DSM 13514 / JCM 11321 / PZ6).